The following is a 699-amino-acid chain: D-(-)-3-hydroxybutyrate oligomer hydrolase (699 aa).

A signal peptide spans 1 to 19 (MNPSLCIAVAFACPLSALA). Residue serine 303 is the Charge relay system of the active site.

This sequence belongs to the D-(-)-3-hydroxybutyrate oligomer hydrolase family.

It localises to the secreted. The catalysed reaction is (3R)-hydroxybutanoate dimer + H2O = 2 (R)-3-hydroxybutanoate + H(+). Its pathway is lipid metabolism; butanoate metabolism. Its function is as follows. Participates in the degradation of poly-3-hydroxybutyrate (PHB). It works downstream of poly(3-hydroxybutyrate) depolymerase, hydrolyzing D(-)-3-hydroxybutyrate oligomers of various length (3HB-oligomers) into 3HB-monomers. This is D-(-)-3-hydroxybutyrate oligomer hydrolase from Azoarcus sp. (strain BH72).